A 475-amino-acid polypeptide reads, in one-letter code: uncharacterized protein (475 aa).

2 consecutive 4Fe-4S ferredoxin-type domains span residues 303 to 333 (ASEFRDVLRCIRCGACMNTCPAYRHIGGHGY) and 352 to 381 (YKDFKDLPYACSLCTACDNVCPVRIPLSKL). Residues cysteine 312, cysteine 315, cysteine 318, cysteine 322, cysteine 362, cysteine 365, cysteine 368, and cysteine 372 each coordinate [4Fe-4S] cluster.

The protein belongs to the LutB/YkgF family.

This is an uncharacterized protein from Escherichia coli (strain K12).